The chain runs to 326 residues: Phospho-N-acetylmuramoyl-pentapeptide-transferase (326 aa).

The next 9 helical transmembrane spans lie at 3-23 (ISIS…PAFI), 51-71 (TMGG…FALF), 79-99 (VGMI…DDFL), 115-135 (LALQ…GGDI), 138-158 (VFGY…FWLV), 169-189 (GVDG…GVIA), 195-215 (MDIL…FIFN), 221-243 (VFMG…MALH), and 306-326 (FFFW…LYLM).

This sequence belongs to the glycosyltransferase 4 family. MraY subfamily. Mg(2+) serves as cofactor.

Its subcellular location is the cell membrane. The catalysed reaction is UDP-N-acetyl-alpha-D-muramoyl-L-alanyl-gamma-D-glutamyl-L-lysyl-D-alanyl-D-alanine + di-trans,octa-cis-undecaprenyl phosphate = Mur2Ac(oyl-L-Ala-gamma-D-Glu-L-Lys-D-Ala-D-Ala)-di-trans,octa-cis-undecaprenyl diphosphate + UMP. It participates in cell wall biogenesis; peptidoglycan biosynthesis. Its function is as follows. Catalyzes the initial step of the lipid cycle reactions in the biosynthesis of the cell wall peptidoglycan: transfers peptidoglycan precursor phospho-MurNAc-pentapeptide from UDP-MurNAc-pentapeptide onto the lipid carrier undecaprenyl phosphate, yielding undecaprenyl-pyrophosphoryl-MurNAc-pentapeptide, known as lipid I. The protein is Phospho-N-acetylmuramoyl-pentapeptide-transferase of Streptococcus pneumoniae serotype 19F (strain G54).